The sequence spans 485 residues: Alpha-amylase (485 aa).

Positions methionine 1–glycine 18 are cleaved as a signal peptide. A Pyrrolidone carboxylic acid modification is found at glutamine 19. Cysteine 46 and cysteine 102 are joined by a disulfide. Ca(2+) contacts are provided by asparagine 116, arginine 164, and aspartate 173. Cysteine 152 and cysteine 166 form a disulfide bridge. Arginine 201 lines the chloride pocket. Aspartate 203 functions as the Nucleophile in the catalytic mechanism. Histidine 207 serves as a coordination point for Ca(2+). The active-site Proton donor is glutamate 240. The chloride site is built by asparagine 303 and arginine 339. A disulfide bridge links cysteine 439 with cysteine 451. An N-linked (GlcNAc...) asparagine glycan is attached at asparagine 448.

The protein belongs to the glycosyl hydrolase 13 family. In terms of assembly, monomer. The cofactor is Ca(2+). It depends on chloride as a cofactor. Expressed in larval and adult gut.

The protein resides in the secreted. It catalyses the reaction Endohydrolysis of (1-&gt;4)-alpha-D-glucosidic linkages in polysaccharides containing three or more (1-&gt;4)-alpha-linked D-glucose units.. This chain is Alpha-amylase, found in Phaedon cochleariae (Mustard beetle).